We begin with the raw amino-acid sequence, 870 residues long: Phenylalanine--tRNA ligase beta subunit (870 aa).

Residues 39–148 (AADLQKFEVA…EDAVVGEPFT (110 aa)) form the tRNA-binding domain. Residues 427 to 551 (PAKKTLDFPA…RIYGYDKIES (125 aa)) form the B5 domain. An RPE1 insert domain is found at 450–498 (LLHNEANKGEFVGNTEHSIAAYKEVREDASTGLTPKLPLEASYVKGLNI). Residues Asp529, Asp535, Glu538, and Glu539 each contribute to the Mg(2+) site. Residues 776-869 (SDYQANFRDY…IEQKFQGTLR (94 aa)) form the FDX-ACB domain.

This sequence belongs to the phenylalanyl-tRNA synthetase beta subunit family. Type 1 subfamily. Tetramer of two alpha and two beta subunits. Requires Mg(2+) as cofactor.

Its subcellular location is the cytoplasm. It carries out the reaction tRNA(Phe) + L-phenylalanine + ATP = L-phenylalanyl-tRNA(Phe) + AMP + diphosphate + H(+). The polypeptide is Phenylalanine--tRNA ligase beta subunit (pheT) (Rickettsia bellii (strain RML369-C)).